Consider the following 264-residue polypeptide: Tryptophan synthase alpha chain (264 aa).

Active-site proton acceptor residues include Glu49 and Asp60.

This sequence belongs to the TrpA family. Tetramer of two alpha and two beta chains.

The catalysed reaction is (1S,2R)-1-C-(indol-3-yl)glycerol 3-phosphate + L-serine = D-glyceraldehyde 3-phosphate + L-tryptophan + H2O. It functions in the pathway amino-acid biosynthesis; L-tryptophan biosynthesis; L-tryptophan from chorismate: step 5/5. The alpha subunit is responsible for the aldol cleavage of indoleglycerol phosphate to indole and glyceraldehyde 3-phosphate. This Geobacter sulfurreducens (strain ATCC 51573 / DSM 12127 / PCA) protein is Tryptophan synthase alpha chain.